A 417-amino-acid chain; its full sequence is DNA-directed RNA polymerase subunit beta (417 aa).

The protein belongs to the RNA polymerase beta chain family. As to quaternary structure, in plastids the minimal PEP RNA polymerase catalytic core is composed of four subunits: alpha, beta, beta', and beta''. When a (nuclear-encoded) sigma factor is associated with the core the holoenzyme is formed, which can initiate transcription.

The protein localises to the plastid. Its subcellular location is the chloroplast. It carries out the reaction RNA(n) + a ribonucleoside 5'-triphosphate = RNA(n+1) + diphosphate. DNA-dependent RNA polymerase catalyzes the transcription of DNA into RNA using the four ribonucleoside triphosphates as substrates. The polypeptide is DNA-directed RNA polymerase subunit beta (rpoB) (Saponaria officinalis (Common soapwort)).